The primary structure comprises 499 residues: Protein SENSITIVE TO PROTON RHIZOTOXICITY 1 (499 aa).

A disordered region spans residues M1–T31. A C2H2-type 1 zinc finger spans residues H244–H266. The C2H2-type 2; atypical zinc-finger motif lies at K354–H385. Positions P390 to M436 are disordered. Composition is skewed to polar residues over residues P396 to G415 and G422 to G435.

In terms of tissue distribution, expressed in roots (e.g. root tips and lateral roots), leaves, flowers (e.g. stigma, sepal, anther, and filament), stems, siliques and cotyledons.

It localises to the nucleus. Probable transcription factor. Together with STOP2, plays a critical role in tolerance to major stress factors in acid soils such as proton H(+) and aluminum ion Al(3+). Required for the expression of genes in response to acidic stress (e.g. ALMT1 and MATE), and Al-activated citrate exudation. This is Protein SENSITIVE TO PROTON RHIZOTOXICITY 1 from Arabidopsis thaliana (Mouse-ear cress).